The sequence spans 116 residues: Peptidyl-tRNA hydrolase (116 aa).

It belongs to the PTH2 family.

The protein localises to the cytoplasm. It carries out the reaction an N-acyl-L-alpha-aminoacyl-tRNA + H2O = an N-acyl-L-amino acid + a tRNA + H(+). In terms of biological role, the natural substrate for this enzyme may be peptidyl-tRNAs which drop off the ribosome during protein synthesis. The chain is Peptidyl-tRNA hydrolase (pth) from Methanococcus maripaludis (strain DSM 14266 / JCM 13030 / NBRC 101832 / S2 / LL).